The following is a 215-amino-acid chain: Autophagy-related protein 101 (215 aa).

A disordered region spans residues 124–147 (PVGKSHHSKLVMDPGEASEERSSR).

It belongs to the ATG101 family. As to quaternary structure, interacts with ATG11 and ATG13A.

Its subcellular location is the cytoplasmic vesicle. The protein resides in the autophagosome. Functionally, accessory protein involved in autophagy. Acts as a scaffold protein of the ATG1-ATG13 complex for faithful delivery of autophagic vesicles to the vacuole. Required for selective mitophagy. The sequence is that of Autophagy-related protein 101 from Arabidopsis thaliana (Mouse-ear cress).